The chain runs to 237 residues: Chloride intracellular channel protein 3 (237 aa).

Residues 1 to 89 (MAETTKLQLF…EEFLEETLGP (89 aa)) form a required for insertion into the membrane region. The 79-residue stretch at 13–91 (ASEDGESVGH…FLEETLGPPD (79 aa)) folds into the GST N-terminal domain. Residues 23–26 (CPSC) carry the G-site motif. C23 and C26 are oxidised to a cystine. Residues 25–45 (SCQRLFMVLLLKGVPFTLTTV) form a helical membrane-spanning segment. In terms of domain architecture, GST C-terminal spans 69-236 (DGDVKTDTLQ…LAAYQPAVHP (168 aa)). The residue at position 160 (S160) is a Phosphoserine.

Belongs to the chloride channel CLIC family. In terms of assembly, associated with the C-terminal of MAPK15.

The protein resides in the nucleus. Its subcellular location is the membrane. It localises to the cell membrane. The protein localises to the cytoplasm. It is found in the secreted. The protein resides in the extracellular space. Its subcellular location is the extracellular matrix. The enzyme catalyses chloride(in) = chloride(out). Its function is as follows. In the soluble state, catalyzes glutaredoxin-like thiol disulfide exchange reactions with reduced glutathione as electron donor. Reduced in a glutathione-dependent way and secreted into the extracellular matrix where it activates TGM2 and promotes blood vessel growth during tissue remodeling as occurs in tumorigenesis. Can reduce specific cysteines in TGM2 and regulate cofactor binding. Can insert into membranes and form outwardly rectifying chloride ion channels. May participate in cellular growth control. This Mus musculus (Mouse) protein is Chloride intracellular channel protein 3.